The primary structure comprises 469 residues: uncharacterized protein (469 aa).

Residues 152-161 (VREGKEEKKG) are compositionally biased toward basic and acidic residues. Positions 152–174 (VREGKEEKKGGPPGRGPPGWRRR) are disordered. 2 coiled-coil regions span residues 346–375 (KAAL…RSES) and 423–453 (SDIT…KIKG).

This is an uncharacterized protein from Homo sapiens (Human).